A 426-amino-acid chain; its full sequence is MAPSAEILCIGTELLLGQIVNTNAQFLAVELAKLGIPHHFQTVVGDNPGRIRLALDIAIERAGIILTTGGLGPTDDDLTHQTLAEHFEVPLVRHPALLALIEERFRERNRPMSPTNAKQADLPEGAQILPNPMGTAPGIVWEPKAGVAILTFPGVPAEMRAMWAETAVPFLRLRGGGQEIFHSRTLRHWGVSESTLAEKVEEFLRGVNPTVAPYAGNGEVKLRITARAAGIAAAESLIAPVEASLRTIAGLDCYGADEDTLASASAALLVRTGTTLAVAESCTGGMLAEALTALPGASRYLRGAVVAYANDLKTSLLGVDEQRMIDHGAVSEPVARAMAEGVRNRLASDWGLALTGVSGPGGGTAQKPVGLVHIALAGPGETRAVEIRLGAQRGRDWIRRVSTQSALDLLRREIINWEAFGIMKER.

It belongs to the CinA family.

In Gloeobacter violaceus (strain ATCC 29082 / PCC 7421), this protein is CinA-like protein.